A 315-amino-acid polypeptide reads, in one-letter code: 2-oxoglutarate and iron-dependent oxygenase domain-containing protein 3 (315 aa).

Residues 1–32 are disordered; sequence MAPQRRGPPRVPEGNSAAERRHANSTKKDRLP. Over 1–41 the chain is Cytoplasmic; the sequence is MAPQRRGPPRVPEGNSAAERRHANSTKKDRLPQEAQRTWLR. The segment covering 18–32 has biased composition (basic and acidic residues); it reads AERRHANSTKKDRLP. The chain crosses the membrane as a helical; Signal-anchor for type II membrane protein span at residues 42-62; the sequence is IVALGVSLALVTFLLWSSAGI. Over 63 to 315 the chain is Lumenal; sequence DDDVAEVVAH…DHGIEDPVLT (253 aa). One can recognise a Fe2OG dioxygenase domain in the interval 203-305; that stretch reads KPTFFSRINS…AITIAFTCNP (103 aa). N-linked (GlcNAc...) asparagine glycosylation occurs at Asn211. The Fe cation site is built by His226 and Asp228. A glycan (N-linked (GlcNAc...) asparagine) is linked at Asn263. His284 is a binding site for Fe cation. Residue Arg294 is part of the active site. Residue Arg294 participates in 2-oxoglutarate binding.

It belongs to the OGFOD3 family. Requires Fe(2+) as cofactor. L-ascorbate serves as cofactor.

It is found in the membrane. This is 2-oxoglutarate and iron-dependent oxygenase domain-containing protein 3 (Ogfod3) from Rattus norvegicus (Rat).